The chain runs to 127 residues: Putative adhesin P1-like protein MPN_203 (127 aa).

The disordered stretch occupies residues 70 to 90 (TENFTQPQPQPQALKTTTPVF).

The protein belongs to the adhesin P1 family.

In Mycoplasma pneumoniae (strain ATCC 29342 / M129 / Subtype 1) (Mycoplasmoides pneumoniae), this protein is Putative adhesin P1-like protein MPN_203.